Reading from the N-terminus, the 337-residue chain is Transaldolase (337 aa).

Lysine 115 bears the N6-acetyllysine mark. Lysine 142 acts as the Schiff-base intermediate with substrate in catalysis. Lysine 219 bears the N6-acetyllysine mark. Serine 237 and serine 256 each carry phosphoserine. Residues lysine 269, lysine 286, and lysine 321 each carry the N6-acetyllysine modification.

This sequence belongs to the transaldolase family. Type 1 subfamily. Homodimer.

The protein localises to the cytoplasm. The catalysed reaction is D-sedoheptulose 7-phosphate + D-glyceraldehyde 3-phosphate = D-erythrose 4-phosphate + beta-D-fructose 6-phosphate. It functions in the pathway carbohydrate degradation; pentose phosphate pathway; D-glyceraldehyde 3-phosphate and beta-D-fructose 6-phosphate from D-ribose 5-phosphate and D-xylulose 5-phosphate (non-oxidative stage): step 2/3. Transaldolase is important for the balance of metabolites in the pentose-phosphate pathway. This Bos taurus (Bovine) protein is Transaldolase (TALDO1).